The sequence spans 394 residues: HORMA domain-containing protein 1 (394 aa).

Residues 24 to 226 (HQSLVLVKRL…TPFHIFKVKV (203 aa)) form the HORMA domain. The segment at 252–394 (KILRDKDVED…RKFSEPKEHI (143 aa)) is disordered. Residues 253–282 (ILRDKDVEDEQEHYTSDDLDMETKMEEQEK) show a composition bias toward basic and acidic residues. Composition is skewed to polar residues over residues 310–324 (LSIS…VNKT) and 343–352 (KMANGNQPVK). Basic and acidic residues predominate over residues 362–374 (QHESGRRVLHHFD). Residue S376 is modified to Phosphoserine. The short motif at 383 to 386 (KRRK) is the Nuclear localization signal element.

Interacts with HORMAD2. Interacts with IHO1. Phosphorylated at Ser-377 in a SPO11-dependent manner.

It is found in the nucleus. The protein resides in the chromosome. Functionally, plays a key role in meiotic progression. Regulates 3 different functions during meiosis: ensures that sufficient numbers of processed DNA double-strand breaks (DSBs) are available for successful homology search by increasing the steady-state numbers of single-stranded DSB ends. Promotes synaptonemal-complex formation independently of its role in homology search. Plays a key role in the male mid-pachytene checkpoint and the female meiotic prophase checkpoint: required for efficient build-up of ATR activity on unsynapsed chromosome regions, a process believed to form the basis of meiotic silencing of unsynapsed chromatin (MSUC) and meiotic prophase quality control in both sexes. The polypeptide is HORMA domain-containing protein 1 (HORMAD1) (Macaca fascicularis (Crab-eating macaque)).